Reading from the N-terminus, the 146-residue chain is 3-dehydroquinate dehydratase (146 aa).

Residue Y24 is the Proton acceptor of the active site. N75, H81, and D88 together coordinate substrate. H101 serves as the catalytic Proton donor. Substrate is bound by residues 102–103 (LS) and R112.

The protein belongs to the type-II 3-dehydroquinase family. As to quaternary structure, homododecamer.

The enzyme catalyses 3-dehydroquinate = 3-dehydroshikimate + H2O. The protein operates within metabolic intermediate biosynthesis; chorismate biosynthesis; chorismate from D-erythrose 4-phosphate and phosphoenolpyruvate: step 3/7. Catalyzes a trans-dehydration via an enolate intermediate. The protein is 3-dehydroquinate dehydratase of Caulobacter vibrioides (strain ATCC 19089 / CIP 103742 / CB 15) (Caulobacter crescentus).